The chain runs to 384 residues: S-adenosylmethionine synthase (384 aa).

ATP is bound at residue H15. Mg(2+) is bound at residue D17. E43 is a K(+) binding site. Residues E56 and Q99 each coordinate L-methionine. A flexible loop region spans residues 99–109; sequence QSPDINQGVDR. Residues 164-166, 230-231, D239, 245-246, A262, and K266 each bind ATP; these read DAK, RF, and RK. Position 239 (D239) interacts with L-methionine. An L-methionine-binding site is contributed by K270.

Belongs to the AdoMet synthase family. As to quaternary structure, homotetramer; dimer of dimers. Requires Mg(2+) as cofactor. K(+) serves as cofactor.

Its subcellular location is the cytoplasm. It carries out the reaction L-methionine + ATP + H2O = S-adenosyl-L-methionine + phosphate + diphosphate. Its pathway is amino-acid biosynthesis; S-adenosyl-L-methionine biosynthesis; S-adenosyl-L-methionine from L-methionine: step 1/1. In terms of biological role, catalyzes the formation of S-adenosylmethionine (AdoMet) from methionine and ATP. The overall synthetic reaction is composed of two sequential steps, AdoMet formation and the subsequent tripolyphosphate hydrolysis which occurs prior to release of AdoMet from the enzyme. In Escherichia coli (strain K12 / DH10B), this protein is S-adenosylmethionine synthase.